A 1076-amino-acid polypeptide reads, in one-letter code: Bifunctional glutamine synthetase adenylyltransferase/adenylyl-removing enzyme (1076 aa).

The tract at residues 1 to 521 is adenylyl removase; that stretch reads MESSMFKPSS…LHLDIYYRPM (521 aa). The interval 524 to 1076 is adenylyl transferase; sequence VNAQMENDQI…LERNRRRAQR (553 aa). Residues 1041–1056 are compositionally biased toward low complexity; it reads ATATASAATPQPQTAP. Residues 1041-1076 are disordered; the sequence is ATATASAATPQPQTAPRPRMHVIAPRLERNRRRAQR.

It belongs to the GlnE family. Mg(2+) serves as cofactor.

The enzyme catalyses [glutamine synthetase]-O(4)-(5'-adenylyl)-L-tyrosine + phosphate = [glutamine synthetase]-L-tyrosine + ADP. It carries out the reaction [glutamine synthetase]-L-tyrosine + ATP = [glutamine synthetase]-O(4)-(5'-adenylyl)-L-tyrosine + diphosphate. In terms of biological role, involved in the regulation of glutamine synthetase GlnA, a key enzyme in the process to assimilate ammonia. When cellular nitrogen levels are high, the C-terminal adenylyl transferase (AT) inactivates GlnA by covalent transfer of an adenylyl group from ATP to specific tyrosine residue of GlnA, thus reducing its activity. Conversely, when nitrogen levels are low, the N-terminal adenylyl removase (AR) activates GlnA by removing the adenylyl group by phosphorolysis, increasing its activity. The regulatory region of GlnE binds the signal transduction protein PII (GlnB) which indicates the nitrogen status of the cell. The protein is Bifunctional glutamine synthetase adenylyltransferase/adenylyl-removing enzyme of Bifidobacterium longum subsp. infantis (strain ATCC 15697 / DSM 20088 / JCM 1222 / NCTC 11817 / S12).